Reading from the N-terminus, the 369-residue chain is Nuclear pore complex-interacting protein family member A7 (369 aa).

A disordered region spans residues 151–171 (SMKEREHREEERQVSEAEENG).

It belongs to the NPIP family.

The protein is Nuclear pore complex-interacting protein family member A7 (NPIPA7) of Homo sapiens (Human).